The chain runs to 92 residues: Acylphosphatase (92 aa).

Residues 5-90 form the Acylphosphatase-like domain; it reads TWRLVAHGRV…GEFAGFEFRP (86 aa). Active-site residues include Arg20 and Asn38.

This sequence belongs to the acylphosphatase family.

The enzyme catalyses an acyl phosphate + H2O = a carboxylate + phosphate + H(+). The polypeptide is Acylphosphatase (acyP) (Cupriavidus necator (strain ATCC 17699 / DSM 428 / KCTC 22496 / NCIMB 10442 / H16 / Stanier 337) (Ralstonia eutropha)).